Here is a 441-residue protein sequence, read N- to C-terminus: UPF0761 membrane protein RSc1559 (441 aa).

Helical transmembrane passes span 44–64 (VLSL…FPMF), 101–121 (GLTA…MLTV), 141–161 (VLVF…SLSV), 182–202 (VVVG…LYVF), 207–227 (LVAW…FEIA), and 248–268 (FAAL…TLLG).

Belongs to the UPF0761 family.

The protein resides in the cell inner membrane. This chain is UPF0761 membrane protein RSc1559, found in Ralstonia nicotianae (strain ATCC BAA-1114 / GMI1000) (Ralstonia solanacearum).